Consider the following 858-residue polypeptide: Toll-like receptor 5 (858 aa).

A signal peptide spans M1–G20. At I21 to K639 the chain is on the extracellular side. 2 N-linked (GlcNAc...) asparagine glycosylation sites follow: N37 and N46. 9 LRR repeats span residues L45 to F68, Q71 to N93, P95 to G117, H120 to N143, A146 to F166, S171 to P192, T197 to R211, V214 to E229, and S234 to G235. N245 carries an N-linked (GlcNAc...) asparagine glycan. 11 LRR repeats span residues L260–G284, S289–F301, D313–G334, N337–N355, K385–F401, G412–S431, H449–S470, S474–W495, H503–H524, A527–L546, and N549–V567. N-linked (GlcNAc...) asparagine glycosylation occurs at N342. N422 carries an N-linked (GlcNAc...) asparagine glycan. In terms of domain architecture, LRRCT spans N579–E631. Intrachain disulfides connect C583/C610 and C585/C629. N-linked (GlcNAc...) asparagine glycosylation is found at N595 and N598. Residues F640–V660 traverse the membrane as a helical segment. The Cytoplasmic segment spans residues T661 to S858. One can recognise a TIR domain in the interval Y691–I836. Y798 carries the post-translational modification Phosphotyrosine. Position 805 is a phosphoserine; by PKD/PRKD1 (S805).

The protein belongs to the Toll-like receptor family. Homodimer. Interacts with MYD88 (via TIR domain). Interacts with TICAM1 (via TIR domain). Interacts with UNC93B1; this interaction is essential for proper TLR5 localization to the plasma membrane. In terms of processing, phosphorylated at Ser-805 by PKD/PRKD1; phosphorylation induces the production of inflammatory cytokines. Post-translationally, phosphorylated at Tyr-798 upon flagellin binding; required for signaling. Highly expressed on the basolateral surface of intestinal epithelia. Expressed also in other cells such as lung epithelial cells.

The protein resides in the cell membrane. In terms of biological role, pattern recognition receptor (PRR) located on the cell surface that participates in the activation of innate immunity and inflammatory response. Recognizes small molecular motifs named pathogen-associated molecular pattern (PAMPs) expressed by pathogens and microbe-associated molecular patterns (MAMPs) usually expressed by resident microbiota. Upon ligand binding such as bacterial flagellins, recruits intracellular adapter proteins MYD88 and TRIF leading to NF-kappa-B activation, cytokine secretion and induction of the inflammatory response. Plays thereby an important role in the relationship between the intestinal epithelium and enteric microbes and contributes to the gut microbiota composition throughout life. The polypeptide is Toll-like receptor 5 (TLR5) (Homo sapiens (Human)).